The following is a 1997-amino-acid chain: Protein MOR1 (1997 aa).

2 HEAT repeats span residues 48–86 (DARL…AADA) and 164–202 (VVPP…WIGK). The interval 236 to 264 (RKIRSEQEKELEEEVVPEAAGTNNSEEAV) is disordered. 3 HEAT repeats span residues 321–359 (PGDF…GLRT), 362–400 (SGNS…SGCI), and 441–479 (LKLH…MVGM). Positions 501–576 (IGSASDTTSG…DGGPQSKASA (76 aa)) are disordered. A compositionally biased stretch (polar residues) spans 504-520 (ASDTTSGTVAASNTGVG). The span at 529 to 539 (SSSMRRSAASM) shows a compositional bias: low complexity. HEAT repeat units lie at residues 848-886 (EDIS…EAHK), 890-928 (PTGT…AMGP), 931-969 (EKSS…AAQL), and 1007-1045 (PSEA…ICGQ). Residues 1087 to 1115 (MSLPSKAGSKNNKHGPNDRGSNVSKAVSQ) form a disordered region. HEAT repeat units lie at residues 1233–1259 (TTCL…MLTE), 1260–1294 (AEAA…MVNI), 1295–1332 (YSLP…HHGT), and 1334–1372 (VSGL…NLGD). Positions 1400 to 1410 (MDKRREGRPGD) are enriched in basic and acidic residues. Residues 1400-1436 (MDKRREGRPGDARAALRRSVRENGSDIAEQSGEAVSR) form a disordered region. An HEAT 14 repeat occupies 1539 to 1579 (RSCKYVLNTLMQTFQIKRLAHAVKEGTLDNLITELLLWLLD). The segment at 1755–1776 (MGQTHWGDAGSNNPNPSTHSTD) is disordered. Over residues 1764–1776 (GSNNPNPSTHSTD) the composition is skewed to polar residues.

The protein belongs to the TOG/XMAP215 family.

It localises to the cytoplasm. The protein localises to the cytoskeleton. Microtubule-associated protein that is essential for cortical microtubules organization and function. The chain is Protein MOR1 (MOR1) from Oryza sativa subsp. japonica (Rice).